The sequence spans 343 residues: Transcription factor BPE (343 aa).

Residues Gln142–Leu192 enclose the bHLH domain.

Homodimer. Specifically expressed in flowers, mostly in petals, inflorescence and flower buds. As to expression, expressed ubiquitously (leaves, flowers and stems).

The protein localises to the nucleus. In terms of biological role, involved in the control of petal size, by interfering with postmitotic cell expansion to limit final petal cell size. The polypeptide is Transcription factor BPE (BPE) (Arabidopsis thaliana (Mouse-ear cress)).